The sequence spans 231 residues: MADLENKTVKANVENKPGAAKTQSVSAPKRTESGAKKQIWEKRSAHDSKDMPKKSVDRANKVKNRTRFGEANNEFSEKVVNISRVTKVVKGGRRFSFSAFVVVGDKKGKVGFGHGKANEVPDAIKKAVKDARNHLISVPIQNKITVPHEIHAKFLASKVMLKPAPKGKGIVASGTVRAVVELAGYTDIYTKTYGSRSKANIVRATLKALQQLRTPEQIAEIRDKDVKDLLG.

Residues 1–63 (MADLENKTVK…KSVDRANKVK (63 aa)) form a disordered region. Residues 29-60 (KRTESGAKKQIWEKRSAHDSKDMPKKSVDRAN) show a composition bias toward basic and acidic residues. The region spanning 75 to 138 (FSEKVVNISR…KDARNHLISV (64 aa)) is the S5 DRBM domain.

This sequence belongs to the universal ribosomal protein uS5 family. As to quaternary structure, part of the 30S ribosomal subunit. Contacts proteins S4 and S8.

Its function is as follows. With S4 and S12 plays an important role in translational accuracy. In terms of biological role, located at the back of the 30S subunit body where it stabilizes the conformation of the head with respect to the body. This chain is Small ribosomal subunit protein uS5, found in Mycoplasmopsis agalactiae (strain NCTC 10123 / CIP 59.7 / PG2) (Mycoplasma agalactiae).